The primary structure comprises 238 residues: uncharacterized protein (238 aa).

Positions 1–20 are cleaved as a signal peptide; it reads MNNVKLLIAGSAFFAMSAQA.

This sequence to E.coli GltF.

This is an uncharacterized protein from Escherichia coli (strain K12).